Consider the following 89-residue polypeptide: Putative regulatory protein CPE1749 (89 aa).

It belongs to the RemA family.

This Clostridium perfringens (strain 13 / Type A) protein is Putative regulatory protein CPE1749.